The chain runs to 154 residues: Urease accessory protein UreE (154 aa).

A disordered region spans residues 134–154; sequence PESGAYGKSGHNHGHSHSHED. Residues 143–154 show a composition bias toward basic residues; that stretch reads GHNHGHSHSHED.

It belongs to the UreE family.

It is found in the cytoplasm. Functionally, involved in urease metallocenter assembly. Binds nickel. Probably functions as a nickel donor during metallocenter assembly. The chain is Urease accessory protein UreE from Alteromonas mediterranea (strain DSM 17117 / CIP 110805 / LMG 28347 / Deep ecotype).